A 406-amino-acid chain; its full sequence is uncharacterized protein (406 aa).

Belongs to the glycosyltransferase group 1 family. Glycosyltransferase 4 subfamily.

This is an uncharacterized protein from Methanocaldococcus jannaschii (strain ATCC 43067 / DSM 2661 / JAL-1 / JCM 10045 / NBRC 100440) (Methanococcus jannaschii).